The primary structure comprises 185 residues: Ribosome-recycling factor (185 aa).

It belongs to the RRF family.

It localises to the cytoplasm. Functionally, responsible for the release of ribosomes from messenger RNA at the termination of protein biosynthesis. May increase the efficiency of translation by recycling ribosomes from one round of translation to another. This chain is Ribosome-recycling factor, found in Streptococcus mutans serotype c (strain ATCC 700610 / UA159).